The primary structure comprises 319 residues: Heavy metal-associated isoprenylated plant protein 9 (319 aa).

Composition is skewed to basic and acidic residues over residues 1-11 (MGEEVKPEAKE) and 24-45 (EEKKKDVAEEKKVAAEEEKPKE). Residues 1–57 (MGEEVKPEAKEAASAPQAVPAEEEEKKKDVAEEKKVAAEEEKPKEEEEPQPPPPPPP) are disordered. Positions 21-48 (AEEEEKKKDVAEEKKVAAEEEKPKEEEE) form a coiled coil. 2 consecutive HMA domains span residues 55–118 (PPPF…KRMA) and 144–208 (LTTV…KQAR). The a metal cation site is built by cysteine 66, cysteine 69, cysteine 155, and cysteine 158. The tract at residues 207-282 (ARIVPQPDPE…RDNEMTAMAQ (76 aa)) is disordered. Basic and acidic residues predominate over residues 224-254 (QEEKKEESGEGNEKPPETGEEKEEEKKKEGE). Acidic residues predominate over residues 255–268 (ENGEEGGGEEAAAT). Cysteine 316 carries the cysteine methyl ester modification. Residue cysteine 316 is the site of S-farnesyl cysteine attachment. Positions 317 to 319 (CIS) are cleaved as a propeptide — removed in mature form.

The protein belongs to the HIPP family.

In terms of biological role, heavy-metal-binding protein. This Arabidopsis thaliana (Mouse-ear cress) protein is Heavy metal-associated isoprenylated plant protein 9.